Reading from the N-terminus, the 264-residue chain is Small ribosomal subunit protein mS23 (264 aa).

A disordered region spans residues 233 to 264; sequence ARTSNPAGSWKDDTTLNTAQEEESTTSENLHF.

This sequence belongs to the mitochondrion-specific ribosomal protein mS23 family. Component of the mitochondrial small ribosomal subunit. Mature mitochondrial ribosomes consist of a small (37S) and a large (54S) subunit. The 37S subunit contains at least 33 different proteins and 1 molecule of RNA (15S). The 54S subunit contains at least 45 different proteins and 1 molecule of RNA (21S).

It is found in the mitochondrion. This is Small ribosomal subunit protein mS23 (RSM25) from Saccharomyces cerevisiae (strain YJM789) (Baker's yeast).